Here is a 522-residue protein sequence, read N- to C-terminus: Peptide methionine sulfoxide reductase MsrA/MsrB (522 aa).

A Thioredoxin domain is found at 17–174 (LALGACSPKI…ALALIRDPNA (158 aa)). C68 and C71 form a disulfide bridge. Residues 199-354 (RTIYLAGGCF…PNGYCHIDIR (156 aa)) form a peptide methionine sulfoxide reductase A region. The active site involves C207. The MsrB domain maps to 383–506 (DAELKRTLTE…NGASLKFIPL (124 aa)). A disulfide bond links C440 and C495. C495 functions as the Nucleophile in the catalytic mechanism.

In the N-terminal section; belongs to the thioredoxin family. The protein in the central section; belongs to the MsrA Met sulfoxide reductase family. This sequence in the C-terminal section; belongs to the MsrB Met sulfoxide reductase family.

The enzyme catalyses L-methionyl-[protein] + [thioredoxin]-disulfide + H2O = L-methionyl-(S)-S-oxide-[protein] + [thioredoxin]-dithiol. It catalyses the reaction [thioredoxin]-disulfide + L-methionine + H2O = L-methionine (S)-S-oxide + [thioredoxin]-dithiol. It carries out the reaction L-methionyl-[protein] + [thioredoxin]-disulfide + H2O = L-methionyl-(R)-S-oxide-[protein] + [thioredoxin]-dithiol. Functionally, has an important function as a repair enzyme for proteins that have been inactivated by oxidation. Catalyzes the reversible oxidation-reduction of methionine sulfoxide in proteins to methionine. This Neisseria meningitidis serogroup A / serotype 4A (strain DSM 15465 / Z2491) protein is Peptide methionine sulfoxide reductase MsrA/MsrB (msrAB).